A 491-amino-acid polypeptide reads, in one-letter code: Glutamyl-tRNA(Gln) amidotransferase subunit A (491 aa).

Active-site charge relay system residues include Lys-77 and Ser-152. Ser-176 functions as the Acyl-ester intermediate in the catalytic mechanism.

This sequence belongs to the amidase family. GatA subfamily. Heterotrimer of A, B and C subunits.

The enzyme catalyses L-glutamyl-tRNA(Gln) + L-glutamine + ATP + H2O = L-glutaminyl-tRNA(Gln) + L-glutamate + ADP + phosphate + H(+). In terms of biological role, allows the formation of correctly charged Gln-tRNA(Gln) through the transamidation of misacylated Glu-tRNA(Gln) in organisms which lack glutaminyl-tRNA synthetase. The reaction takes place in the presence of glutamine and ATP through an activated gamma-phospho-Glu-tRNA(Gln). The chain is Glutamyl-tRNA(Gln) amidotransferase subunit A from Chlamydia felis (strain Fe/C-56) (Chlamydophila felis).